We begin with the raw amino-acid sequence, 292 residues long: Nanos homolog 1 (292 aa).

Disordered regions lie at residues Met1–Ser41 and Gly68–Arg121. An essential for its translational repressor activity region spans residues Phe40–Ala56. Residues Pro76–Pro87 show a composition bias toward low complexity. Over residues Asp104–Glu115 the composition is skewed to acidic residues. A Nanos-type zinc finger spans residues Val213–Leu267. Cys214, Cys217, His230, Cys241, Cys249, Cys252, His260, and Cys265 together coordinate Zn(2+). Short sequence motifs (C2HC) lie at residues Cys214–Cys241 and Cys249–Cys265. Positions Ser268–Arg292 are disordered. Residues Lys269–Arg280 show a composition bias toward pro residues. Over residues Ser281–Arg292 the composition is skewed to basic and acidic residues.

This sequence belongs to the nanos family. As to quaternary structure, interacts with PUM2, SNAPIN and CTNNB1. Interacts (via N-terminal region) with CTNND1. Interacts with DDX20 (via N-terminal region). In terms of tissue distribution, testis and ovary (at protein level). Predominantly expressed in testis. Specifically expressed during germline development. In adult tissues, it is mainly expressed in spermatogonia, the stem cells of the germline. Also expressed during meiosis in spermatocytes. Not present in late, post-meiotic stage germ cells. Expressed in fetal ovaries, while it is weakly or not expressed in mature postmeiotic oocytes, suggesting that it may be expressed in premeiotic female germ cells. Expressed at high levels only in the E-cadherin deficient cell lines. Highly expressed in lung carcinomas and mostly detected in invasive tumor cells and its expression correlates with tumor aggressiveness.

Its subcellular location is the cytoplasm. The protein localises to the perinuclear region. Its function is as follows. May act as a translational repressor which regulates translation of specific mRNAs by forming a complex with PUM2 that associates with the 3'-UTR of mRNA targets. Capable of interfering with the proadhesive and anti-invasive functions of E-cadherin. Up-regulates the production of MMP14 to promote tumor cell invasion. In Homo sapiens (Human), this protein is Nanos homolog 1 (NANOS1).